Reading from the N-terminus, the 506-residue chain is Galactose/methyl galactoside import ATP-binding protein MglA (506 aa).

ABC transporter domains lie at 14-249 (LTMT…VGRE) and 260-506 (TPKE…AKYL). 46-53 (GENGAGKS) is an ATP binding site.

Belongs to the ABC transporter superfamily. Galactose/methyl galactoside importer (TC 3.A.1.2.3) family. In terms of assembly, the complex is composed of one ATP-binding protein (MglA), two transmembrane proteins (MglC) and a solute-binding protein (MglB).

The protein resides in the cell inner membrane. It carries out the reaction D-galactose(out) + ATP + H2O = D-galactose(in) + ADP + phosphate + H(+). It catalyses the reaction methyl beta-D-galactoside(out) + ATP + H2O = methyl beta-D-galactoside(in) + ADP + phosphate + H(+). Its function is as follows. Part of the ABC transporter complex MglABC involved in galactose/methyl galactoside import. Responsible for energy coupling to the transport system. The protein is Galactose/methyl galactoside import ATP-binding protein MglA of Pasteurella multocida (strain Pm70).